Consider the following 458-residue polypeptide: Biphenyl dioxygenase subunit alpha (458 aa).

The 99-residue stretch at 58 to 156 (WLLLGHESHV…KEGDCGFDKA (99 aa)) folds into the Rieske domain. Positions 100, 102, 120, and 123 each coordinate [2Fe-2S] cluster. Fe cation-binding residues include His-233 and His-239.

Belongs to the bacterial ring-hydroxylating dioxygenase alpha subunit family. As to quaternary structure, heterohexamer consisting of three BphA subunits and three BphE subunits. A ferredoxin (BphF) and a ferredoxin reductase (BphG) must be present to obtain activity. The cofactor is [2Fe-2S] cluster. Fe cation serves as cofactor.

The catalysed reaction is biphenyl + NADH + O2 + H(+) = (2R,3S)-3-phenylcyclohexa-3,5-diene-1,2-diol + NAD(+). Its pathway is xenobiotic degradation; biphenyl degradation; 2-hydroxy-2,4-pentadienoate and benzoate from biphenyl: step 1/4. This Metapseudomonas furukawaii (Pseudomonas furukawaii) protein is Biphenyl dioxygenase subunit alpha (bphA).